The chain runs to 462 residues: A-type ATP synthase subunit B (462 aa).

It belongs to the ATPase alpha/beta chains family. As to quaternary structure, has multiple subunits with at least A(3), B(3), C, D, E, F, H, I and proteolipid K(x).

Its subcellular location is the cell membrane. Component of the A-type ATP synthase that produces ATP from ADP in the presence of a proton gradient across the membrane. The B chain is a regulatory subunit. In Methanococcus maripaludis (strain C5 / ATCC BAA-1333), this protein is A-type ATP synthase subunit B.